The sequence spans 339 residues: Glyoxylate reductase (339 aa).

NADP(+) contacts are provided by residues 157–160 (LGRI) and 239–241 (TAR). Active-site residues include arginine 241 and glutamate 270. Histidine 289 (proton donor) is an active-site residue. 289 to 291 (HIA) is an NADP(+) binding site.

It belongs to the D-isomer specific 2-hydroxyacid dehydrogenase family. GyaR subfamily. As to quaternary structure, homodimer.

It is found in the cytoplasm. The enzyme catalyses glycolate + NAD(+) = glyoxylate + NADH + H(+). In Thermofilum pendens (strain DSM 2475 / Hrk 5), this protein is Glyoxylate reductase.